A 1199-amino-acid chain; its full sequence is Putative mitoferrin (1199 aa).

The helical transmembrane segment at 32–52 (VPLWQHIFCGSIAGLMEHVFM) threads the bilayer. N-linked (GlcNAc...) asparagine glycosylation is found at asparagine 92, asparagine 171, asparagine 208, asparagine 268, asparagine 326, asparagine 353, asparagine 443, asparagine 499, asparagine 539, asparagine 649, asparagine 708, asparagine 715, and asparagine 723. The chain crosses the membrane as a helical span at residues 730–750 (GVNVVVLGCIPAHALYFSTFE). N-linked (GlcNAc...) asparagine glycosylation is found at asparagine 763 and asparagine 772. One copy of the Solcar 1 repeat lies at 792–873 (LNYFSIAVSG…ICTNEKMKKI (82 aa)). The next 2 membrane-spanning stretches (helical) occupy residues 795-815 (FSIA…ITPI) and 845-865 (LYLS…IMIC). Residues asparagine 914, asparagine 922, asparagine 965, asparagine 1013, asparagine 1022, asparagine 1041, and asparagine 1056 are each glycosylated (N-linked (GlcNAc...) asparagine). Residues 1109 to 1191 (SYFVCAGIGG…WGTYETMKRF (83 aa)) form a Solcar 2 repeat. The helical transmembrane segment at 1111 to 1131 (FVCAGIGGGIAAVLTNPLDVI) threads the bilayer.

It belongs to the mitochondrial carrier (TC 2.A.29) family.

It is found in the mitochondrion membrane. In terms of biological role, putative iron transporter. In Plasmodium falciparum (isolate 3D7), this protein is Putative mitoferrin.